The primary structure comprises 242 residues: tRNA (guanine-N(1)-)-methyltransferase (242 aa).

S-adenosyl-L-methionine is bound by residues glycine 108 and 127–132 (IGDYVL).

It belongs to the RNA methyltransferase TrmD family. Homodimer.

Its subcellular location is the cytoplasm. The catalysed reaction is guanosine(37) in tRNA + S-adenosyl-L-methionine = N(1)-methylguanosine(37) in tRNA + S-adenosyl-L-homocysteine + H(+). In terms of biological role, specifically methylates guanosine-37 in various tRNAs. The polypeptide is tRNA (guanine-N(1)-)-methyltransferase (Lactobacillus acidophilus (strain ATCC 700396 / NCK56 / N2 / NCFM)).